A 295-amino-acid polypeptide reads, in one-letter code: MLDQDLDDIHPLFQGAPQTTEFKKLRKRIVRYTREAVEQYGMVERREDGSLPKWLVCLSGGKDSYTLLAVLYELKWRGLLPVDLLACNLDQGQPGFPATVLPEFLEKMQVPHRIEYQDTYSIVMDKVPQGRTYCALCSRLRRGNLYRIAREEGCSAVVLGHHRDDILETFFMNLFHGGRLATMPPKLVNEEGDLFVFRPLAHVAEADCEKFARAMNYPIIPCDLCGSQDGLQRQQVKQILDTWESNSPGRRQVMFRALMNARPSHLLDPKLFDFTGLALKNIDNSTETEEIPELR.

The short motif at 59–64 (SGGKDS) is the PP-loop motif element. Positions 134, 137, and 225 each coordinate [4Fe-4S] cluster.

It belongs to the TtcA family. Homodimer. Mg(2+) serves as cofactor. Requires [4Fe-4S] cluster as cofactor.

The protein resides in the cytoplasm. The enzyme catalyses cytidine(32) in tRNA + S-sulfanyl-L-cysteinyl-[cysteine desulfurase] + AH2 + ATP = 2-thiocytidine(32) in tRNA + L-cysteinyl-[cysteine desulfurase] + A + AMP + diphosphate + H(+). It participates in tRNA modification. In terms of biological role, catalyzes the ATP-dependent 2-thiolation of cytidine in position 32 of tRNA, to form 2-thiocytidine (s(2)C32). The sulfur atoms are provided by the cysteine/cysteine desulfurase (IscS) system. This Ruegeria sp. (strain TM1040) (Silicibacter sp.) protein is tRNA-cytidine(32) 2-sulfurtransferase.